The following is a 585-amino-acid chain: Protein FAM151A (585 aa).

Residues 14 to 34 (WVFAGITCVSVVVIAAIVLAI) form a helical membrane-spanning segment.

This sequence belongs to the menorin family.

It localises to the membrane. This Homo sapiens (Human) protein is Protein FAM151A (FAM151A).